The chain runs to 37 residues: Large ribosomal subunit protein bL36c (37 aa).

This sequence belongs to the bacterial ribosomal protein bL36 family.

Its subcellular location is the plastid. The protein resides in the chloroplast. This is Large ribosomal subunit protein bL36c from Bigelowiella natans (Pedinomonas minutissima).